Reading from the N-terminus, the 556-residue chain is Undecaprenyl phosphate-alpha-4-amino-4-deoxy-L-arabinose arabinosyl transferase (556 aa).

10 helical membrane-spanning segments follow: residues 88–108 (FASV…AMML), 116–136 (LLAA…TYSV), 179–199 (FMTK…PVAL), 207–227 (LLLF…PWAL), 258–278 (APFW…LALL), 296–316 (FFLL…KGKL), 319–339 (YILP…SGLA), 355–375 (IVFG…IIVP), 384–404 (LTII…AVSL), and 410–430 (WGYL…GSIP).

This sequence belongs to the glycosyltransferase 83 family.

Its subcellular location is the cell inner membrane. The catalysed reaction is 4-amino-4-deoxy-alpha-L-arabinopyranosyl di-trans,octa-cis-undecaprenyl phosphate + lipid IVA = lipid IIA + di-trans,octa-cis-undecaprenyl phosphate.. It participates in lipopolysaccharide metabolism; 4-amino-4-deoxy-beta-L-arabinose-lipid A biosynthesis. Its function is as follows. Catalyzes the transfer of the L-Ara4N moiety of the glycolipid undecaprenyl phosphate-alpha-L-Ara4N to lipid A. The modified arabinose is attached to lipid A and is required for resistance to polymyxin and cationic antimicrobial peptides. This chain is Undecaprenyl phosphate-alpha-4-amino-4-deoxy-L-arabinose arabinosyl transferase, found in Pectobacterium atrosepticum (strain SCRI 1043 / ATCC BAA-672) (Erwinia carotovora subsp. atroseptica).